The chain runs to 735 residues: Probable pre-mRNA-splicing factor ATP-dependent RNA helicase prp43 (735 aa).

Residues 1–12 (MEPAQKKLRQES) show a composition bias toward basic and acidic residues. The tract at residues 1-34 (MEPAQKKLRQESKNPYLAHLNNGDDSEEVVSSKG) is disordered. The Helicase ATP-binding domain maps to 85–250 (LKIYHENQII…FFDAPLLAVP (166 aa)). Residue 98–105 (GETGSGKT) participates in ATP binding. The DEAH box motif lies at 197–200 (DEAH). Residues 275-455 (TVLQIHVEEG…STVLELKKLG (181 aa)) enclose the Helicase C-terminal domain.

This sequence belongs to the DEAD box helicase family. DEAH subfamily. DDX15/PRP43 sub-subfamily.

The protein localises to the nucleus. It carries out the reaction ATP + H2O = ADP + phosphate + H(+). Pre-mRNA processing factor involved in disassembly of spliceosomes after the release of mature mRNA. This is Probable pre-mRNA-splicing factor ATP-dependent RNA helicase prp43 (prp43) from Schizosaccharomyces pombe (strain 972 / ATCC 24843) (Fission yeast).